Consider the following 122-residue polypeptide: Small ribosomal subunit protein uS13 (122 aa).

Residues glycine 95–lysine 122 are disordered.

This sequence belongs to the universal ribosomal protein uS13 family. Part of the 30S ribosomal subunit. Forms a loose heterodimer with protein S19. Forms two bridges to the 50S subunit in the 70S ribosome.

Its function is as follows. Located at the top of the head of the 30S subunit, it contacts several helices of the 16S rRNA. In the 70S ribosome it contacts the 23S rRNA (bridge B1a) and protein L5 of the 50S subunit (bridge B1b), connecting the 2 subunits; these bridges are implicated in subunit movement. Contacts the tRNAs in the A and P-sites. The sequence is that of Small ribosomal subunit protein uS13 from Caulobacter vibrioides (strain ATCC 19089 / CIP 103742 / CB 15) (Caulobacter crescentus).